Here is a 231-residue protein sequence, read N- to C-terminus: NADH-ubiquinone oxidoreductase chain 4 (231 aa).

6 helical membrane passes run 1-21 (PIAGSMVLAAILLKLGGYGII), 34-54 (MFLPFIVLALWGAILANLTCL), 63-85 (IAYSSVSHMGLVVAAIMIQTPWG), 89-111 (AMTLMIAHGFTSSALFCLANTTY), 128-148 (ILPMATTWWLLTNLMNIAIPP), and 156-176 (LLIMSALFSWCPTTIILLGLS).

The protein belongs to the complex I subunit 4 family.

It is found in the mitochondrion membrane. It carries out the reaction a ubiquinone + NADH + 5 H(+)(in) = a ubiquinol + NAD(+) + 4 H(+)(out). Its function is as follows. Core subunit of the mitochondrial membrane respiratory chain NADH dehydrogenase (Complex I) that is believed to belong to the minimal assembly required for catalysis. Complex I functions in the transfer of electrons from NADH to the respiratory chain. The immediate electron acceptor for the enzyme is believed to be ubiquinone. The sequence is that of NADH-ubiquinone oxidoreductase chain 4 (MT-ND4) from Gloydius intermedius (Central Asian pit viper).